Consider the following 560-residue polypeptide: Probable sulfate transporter Rv1739c (560 aa).

Residues 1 to 436 (MIPTMTSAGW…VLGFVPGIAG (436 aa)) form a required for sulfate transport in E.coli region. 11 helical membrane-spanning segments follow: residues 29-49 (VLAG…YATV), 51-71 (GLPP…YALL), 79-99 (IGPE…MAAG), 105-125 (AVLA…AGTA), 138-158 (VLVG…LGTI), 184-204 (WPTF…TRWA), 207-227 (APGP…MSLD), 256-276 (ALII…VLTA), 333-353 (LIAL…LAMF), 355-375 (IAAL…LSEF), and 394-414 (AAVL…LSIL). The 116-residue stretch at 442–557 (DYPQAKRVPG…MTLPTAVQAF (116 aa)) folds into the STAS domain.

It belongs to the SLC26A/SulP transporter (TC 2.A.53) family.

It localises to the cell membrane. Expression in E.coli induces sulfate uptake during early- to mid-log phase growth. Uptake is maximal at pH 6.0, is sulfate-specific, requires E.coli CysA and the transmembrane segment but not the STAS domain of the protein. In Mycobacterium tuberculosis (strain ATCC 25618 / H37Rv), this protein is Probable sulfate transporter Rv1739c.